The following is a 229-amino-acid chain: MSKNSVIIVAAGKGKRMNSSISKQFLQIKNKPILYYTLSKFSTHESIDEIVLVTLEDKIEVCGDIIDKYNINKVSKIVPGGKERQDSVYNGLKAVSKDCEVVLIHDAARPFVTSDIIENGIRYTNQYGAAACGVIPKDTIKIKSEKGFAIDTPNREDLFIVQTPQCFNYNIILDCHEKLKKHNKKVTDDTMVLENYGKSVYLYEGNYSNIKITTPEDLILGEQILEKLT.

This sequence belongs to the IspD/TarI cytidylyltransferase family. IspD subfamily.

The enzyme catalyses 2-C-methyl-D-erythritol 4-phosphate + CTP + H(+) = 4-CDP-2-C-methyl-D-erythritol + diphosphate. The protein operates within isoprenoid biosynthesis; isopentenyl diphosphate biosynthesis via DXP pathway; isopentenyl diphosphate from 1-deoxy-D-xylulose 5-phosphate: step 2/6. Its function is as follows. Catalyzes the formation of 4-diphosphocytidyl-2-C-methyl-D-erythritol from CTP and 2-C-methyl-D-erythritol 4-phosphate (MEP). The sequence is that of 2-C-methyl-D-erythritol 4-phosphate cytidylyltransferase from Clostridium botulinum (strain Okra / Type B1).